Here is a 740-residue protein sequence, read N- to C-terminus: Phosphoribosylformylglycinamidine synthase subunit PurL (740 aa).

H53 is an active-site residue. Residues Y56 and K95 each contribute to the ATP site. E97 contributes to the Mg(2+) binding site. Residues S98–H101 and R120 each bind substrate. The Proton acceptor role is filled by H99. D121 serves as a coordination point for Mg(2+). Q244 is a substrate binding site. D274 is a Mg(2+) binding site. Substrate is bound at residue E318–Q320. The ATP site is built by D501 and G538. Mg(2+) is bound at residue N539. Substrate is bound at residue S541.

Belongs to the FGAMS family. In terms of assembly, monomer. Part of the FGAM synthase complex composed of 1 PurL, 1 PurQ and 2 PurS subunits.

The protein resides in the cytoplasm. The enzyme catalyses N(2)-formyl-N(1)-(5-phospho-beta-D-ribosyl)glycinamide + L-glutamine + ATP + H2O = 2-formamido-N(1)-(5-O-phospho-beta-D-ribosyl)acetamidine + L-glutamate + ADP + phosphate + H(+). Its pathway is purine metabolism; IMP biosynthesis via de novo pathway; 5-amino-1-(5-phospho-D-ribosyl)imidazole from N(2)-formyl-N(1)-(5-phospho-D-ribosyl)glycinamide: step 1/2. Functionally, part of the phosphoribosylformylglycinamidine synthase complex involved in the purines biosynthetic pathway. Catalyzes the ATP-dependent conversion of formylglycinamide ribonucleotide (FGAR) and glutamine to yield formylglycinamidine ribonucleotide (FGAM) and glutamate. The FGAM synthase complex is composed of three subunits. PurQ produces an ammonia molecule by converting glutamine to glutamate. PurL transfers the ammonia molecule to FGAR to form FGAM in an ATP-dependent manner. PurS interacts with PurQ and PurL and is thought to assist in the transfer of the ammonia molecule from PurQ to PurL. This Lactobacillus delbrueckii subsp. bulgaricus (strain ATCC 11842 / DSM 20081 / BCRC 10696 / JCM 1002 / NBRC 13953 / NCIMB 11778 / NCTC 12712 / WDCM 00102 / Lb 14) protein is Phosphoribosylformylglycinamidine synthase subunit PurL.